We begin with the raw amino-acid sequence, 307 residues long: Undecaprenyl-diphosphatase 2 (307 aa).

8 helical membrane passes run 19-41 (GVTEFLPVSSTGHMIILGSIIGF), 56-76 (IHMFEIIIQLGAILAIVVLYW), 117-137 (FKFWTNIVVACIPAIVIGLPF), 144-164 (LLFFPAPVAAALMVGAVWMIF), 208-228 (IIGAWIVGVATVAGAEFSFFL), 229-249 (AIPMMLGASLLFLIKNSVVLS), 251-271 (VQILGLAVGFIVAFIVALVVV), and 285-305 (IFAVYRLAIGIIVLVLGFTKV).

It belongs to the UppP family.

The protein localises to the cell membrane. It carries out the reaction di-trans,octa-cis-undecaprenyl diphosphate + H2O = di-trans,octa-cis-undecaprenyl phosphate + phosphate + H(+). Its function is as follows. Catalyzes the dephosphorylation of undecaprenyl diphosphate (UPP). Confers resistance to bacitracin. In Clostridium acetobutylicum (strain ATCC 824 / DSM 792 / JCM 1419 / IAM 19013 / LMG 5710 / NBRC 13948 / NRRL B-527 / VKM B-1787 / 2291 / W), this protein is Undecaprenyl-diphosphatase 2.